The following is a 213-amino-acid chain: Uridine kinase (213 aa).

An ATP-binding site is contributed by glycine 14–serine 21.

Belongs to the uridine kinase family.

Its subcellular location is the cytoplasm. The enzyme catalyses uridine + ATP = UMP + ADP + H(+). It carries out the reaction cytidine + ATP = CMP + ADP + H(+). The protein operates within pyrimidine metabolism; CTP biosynthesis via salvage pathway; CTP from cytidine: step 1/3. It participates in pyrimidine metabolism; UMP biosynthesis via salvage pathway; UMP from uridine: step 1/1. The sequence is that of Uridine kinase from Vibrio atlanticus (strain LGP32) (Vibrio splendidus (strain Mel32)).